A 444-amino-acid chain; its full sequence is Tryptophan 5-hydroxylase 1 (444 aa).

An ACT domain is found at 19 to 94 (SLIFSLKNEV…NVLSVNLPDN (76 aa)). S58 bears the Phosphoserine; by PKA mark. L-tryptophan is bound by residues Y235, R257, and T265. Fe cation contacts are provided by H272, H277, and E317. L-tryptophan-binding residues include S336 and I366.

Belongs to the biopterin-dependent aromatic amino acid hydroxylase family. In terms of assembly, homotetramer. Interacts with DNAJC12. Fe(2+) serves as cofactor. Post-translationally, ubiquitinated, leading to its degradation by the proteasome. Ubiquitinated is triggered by phosphorylation. In terms of processing, phosphorylated; triggering degradation by the proteasome. As to expression, seems to be less widely expressed than isoform 1.

The catalysed reaction is (6R)-L-erythro-5,6,7,8-tetrahydrobiopterin + L-tryptophan + O2 = 5-hydroxy-L-tryptophan + (4aS,6R)-4a-hydroxy-L-erythro-5,6,7,8-tetrahydrobiopterin. Its pathway is aromatic compound metabolism; serotonin biosynthesis; serotonin from L-tryptophan: step 1/2. In terms of biological role, oxidizes L-tryptophan to 5-hydroxy-l-tryptophan in the rate-determining step of serotonin biosynthesis. In Homo sapiens (Human), this protein is Tryptophan 5-hydroxylase 1 (TPH1).